The following is a 401-amino-acid chain: uncharacterized protein (401 aa).

7 helical membrane-spanning segments follow: residues 44 to 64 (LKYT…LVFI), 69 to 89 (LYSF…FVLL), 99 to 119 (LVFN…LIIF), 130 to 150 (ILST…SIIP), 201 to 221 (FIYA…LYIL), 246 to 266 (ILFY…SFVA), and 286 to 306 (LFFS…GTVV).

Its subcellular location is the cell membrane. This is an uncharacterized protein from Mycoplasma pneumoniae (strain ATCC 29342 / M129 / Subtype 1) (Mycoplasmoides pneumoniae).